Reading from the N-terminus, the 465-residue chain is tRNA (guanine(37)-N(1))-methyltransferase (465 aa).

The transit peptide at methionine 1–alanine 20 directs the protein to the mitochondrion. Residues histidine 238 and aspartate 304–glycine 305 contribute to the S-adenosyl-L-methionine site. A disordered region spans residues alanine 326–valine 345. Asparagine 359 contacts S-adenosyl-L-methionine.

It belongs to the class I-like SAM-binding methyltransferase superfamily. TRM5/TYW2 family. As to quaternary structure, monomer.

It localises to the mitochondrion matrix. Its subcellular location is the nucleus. The protein resides in the cytoplasm. It carries out the reaction guanosine(37) in tRNA + S-adenosyl-L-methionine = N(1)-methylguanosine(37) in tRNA + S-adenosyl-L-homocysteine + H(+). Its function is as follows. Specifically methylates the N1 position of guanosine-37 in various cytoplasmic and mitochondrial tRNAs. Methylation is not dependent on the nature of the nucleoside 5' of the target nucleoside. This is the first step in the biosynthesis of wybutosine (yW), a modified base adjacent to the anticodon of tRNAs and required for accurate decoding. This Fusarium vanettenii (strain ATCC MYA-4622 / CBS 123669 / FGSC 9596 / NRRL 45880 / 77-13-4) (Fusarium solani subsp. pisi) protein is tRNA (guanine(37)-N(1))-methyltransferase.